The following is a 366-amino-acid chain: Flagellar P-ring protein (366 aa).

Residues 1–24 (MWPLLLAVALSTLLPLAMPGSAGA) form the signal peptide.

It belongs to the FlgI family. In terms of assembly, the basal body constitutes a major portion of the flagellar organelle and consists of four rings (L,P,S, and M) mounted on a central rod.

Its subcellular location is the periplasm. It is found in the bacterial flagellum basal body. Its function is as follows. Assembles around the rod to form the L-ring and probably protects the motor/basal body from shearing forces during rotation. The protein is Flagellar P-ring protein of Nitratidesulfovibrio vulgaris (strain ATCC 29579 / DSM 644 / CCUG 34227 / NCIMB 8303 / VKM B-1760 / Hildenborough) (Desulfovibrio vulgaris).